Consider the following 913-residue polypeptide: Eukaryotic translation initiation factor 3 subunit C (913 aa).

Residues 1–44 (MSRFFTTGSDSESESSLSGEELVTKPVGGNYGKQPLLLSEDEED) form a disordered region. Residues 8–21 (GSDSESESSLSGEE) show a composition bias toward low complexity. Ser9, Ser11, Ser13, Ser15, Ser16, Ser18, and Ser39 each carry phosphoserine. Lys99 carries the N6-acetyllysine modification. Disordered stretches follow at residues 157–301 (TSYK…GGEW) and 522–542 (QLTP…NEGE). Residues Ser166, Ser178, Ser181, and Ser182 each carry the phosphoserine modification. Residues 166–190 (SADEDAEKNEEDSEGSSDEDEDEDG) are compositionally biased toward acidic residues. The span at 199–216 (KKSEAPSGESRKFLKKMD) shows a compositional bias: basic and acidic residues. Acidic residues predominate over residues 217 to 232 (DEDEDSEDSEDDEDWD). Basic and acidic residues predominate over residues 261-278 (PTTDEDKKAAEKKREDKA). Positions 522–531 (QLTPPEGSSK) are enriched in polar residues. Residue Thr524 is modified to Phosphothreonine. Position 643 is an N6-acetyllysine (Lys643). The PCI domain occupies 673 to 849 (FHLHINLELL…QTVVMHRTEP (177 aa)). The disordered stretch occupies residues 885–913 (FRDQKDGYRKNEGYMRRGGYRQQQSQTAY). Residues 886–899 (RDQKDGYRKNEGYM) are compositionally biased toward basic and acidic residues. Ser909 is modified (phosphoserine).

As to quaternary structure, component of the eukaryotic translation initiation factor 3 (eIF-3) complex, which is composed of 13 subunits: EIF3A, EIF3B, EIF3C, EIF3D, EIF3E, EIF3F, EIF3G, EIF3H, EIF3I, EIF3J, EIF3K, EIF3L and EIF3M. The eIF-3 complex appears to include 3 stable modules: module A is composed of EIF3A, EIF3B, EIF3G and EIF3I; module B is composed of EIF3F, EIF3H, and EIF3M; and module C is composed of EIF3C, EIF3D, EIF3E, EIF3K and EIF3L. EIF3C of module C binds EIF3B of module A and EIF3H of module B, thereby linking the three modules. EIF3J is a labile subunit that binds to the eIF-3 complex via EIF3B. The eIF-3 complex interacts with RPS6KB1 under conditions of nutrient depletion. Mitogenic stimulation leads to binding and activation of a complex composed of MTOR and RPTOR, leading to phosphorylation and release of RPS6KB1 and binding of EIF4B to eIF-3. Identified in a HCV IRES-mediated translation complex, at least composed of EIF3C, IGF2BP1, RPS3 and HCV RNA-replicon. Interacts with ALKBH4, IFIT1 and IFIT2. Interacts with BZW2/5MP1. Post-translationally, phosphorylated. Phosphorylation is enhanced upon serum stimulation.

The protein localises to the cytoplasm. Functionally, component of the eukaryotic translation initiation factor 3 (eIF-3) complex, which is required for several steps in the initiation of protein synthesis. The eIF-3 complex associates with the 40S ribosome and facilitates the recruitment of eIF-1, eIF-1A, eIF-2:GTP:methionyl-tRNAi and eIF-5 to form the 43S pre-initiation complex (43S PIC). The eIF-3 complex stimulates mRNA recruitment to the 43S PIC and scanning of the mRNA for AUG recognition. The eIF-3 complex is also required for disassembly and recycling of post-termination ribosomal complexes and subsequently prevents premature joining of the 40S and 60S ribosomal subunits prior to initiation. The eIF-3 complex specifically targets and initiates translation of a subset of mRNAs involved in cell proliferation, including cell cycling, differentiation and apoptosis, and uses different modes of RNA stem-loop binding to exert either translational activation or repression. This Homo sapiens (Human) protein is Eukaryotic translation initiation factor 3 subunit C.